Reading from the N-terminus, the 401-residue chain is Tyrosine--tRNA ligase (401 aa).

A 'HIGH' region motif is present at residues 42 to 51 (PTAPDLHLGH). Residues 226–230 (KMSKS) carry the 'KMSKS' region motif. Lys229 contacts ATP. An S4 RNA-binding domain is found at 336–397 (IALAQLLKQI…GKRRIAKLSI (62 aa)).

Belongs to the class-I aminoacyl-tRNA synthetase family. TyrS type 2 subfamily. In terms of assembly, homodimer.

It localises to the cytoplasm. It carries out the reaction tRNA(Tyr) + L-tyrosine + ATP = L-tyrosyl-tRNA(Tyr) + AMP + diphosphate + H(+). Its function is as follows. Catalyzes the attachment of tyrosine to tRNA(Tyr) in a two-step reaction: tyrosine is first activated by ATP to form Tyr-AMP and then transferred to the acceptor end of tRNA(Tyr). The polypeptide is Tyrosine--tRNA ligase (Legionella pneumophila (strain Lens)).